The primary structure comprises 273 residues: Large ribosomal subunit protein uL2 (273 aa).

Positions 228–273 are disordered; that stretch reads VDHPHGGGEGKTSGGRHPVTPWGFPTKGKKTRKNKRTSKFIVKKRK. A compositionally biased stretch (basic residues) spans 254 to 273; the sequence is KGKKTRKNKRTSKFIVKKRK.

This sequence belongs to the universal ribosomal protein uL2 family. In terms of assembly, part of the 50S ribosomal subunit. Forms a bridge to the 30S subunit in the 70S ribosome.

In terms of biological role, one of the primary rRNA binding proteins. Required for association of the 30S and 50S subunits to form the 70S ribosome, for tRNA binding and peptide bond formation. It has been suggested to have peptidyltransferase activity; this is somewhat controversial. Makes several contacts with the 16S rRNA in the 70S ribosome. The polypeptide is Large ribosomal subunit protein uL2 (Rickettsia felis (strain ATCC VR-1525 / URRWXCal2) (Rickettsia azadi)).